Consider the following 208-residue polypeptide: LexA repressor (208 aa).

Residues 28–48 (RAEIARELGFRSANAAEEHLK) constitute a DNA-binding region (H-T-H motif). Active-site for autocatalytic cleavage activity residues include S125 and K162.

It belongs to the peptidase S24 family. In terms of assembly, homodimer.

The enzyme catalyses Hydrolysis of Ala-|-Gly bond in repressor LexA.. Represses a number of genes involved in the response to DNA damage (SOS response), including recA and lexA. In the presence of single-stranded DNA, RecA interacts with LexA causing an autocatalytic cleavage which disrupts the DNA-binding part of LexA, leading to derepression of the SOS regulon and eventually DNA repair. The sequence is that of LexA repressor from Aliivibrio fischeri (strain ATCC 700601 / ES114) (Vibrio fischeri).